Here is a 335-residue protein sequence, read N- to C-terminus: RVS161-like protein RVS162 (335 aa).

In terms of domain architecture, BAR spans 17 to 310 (VMLKTGHIEQ…LDAQTRQDYI (294 aa)). The stretch at 30–56 (KEYEFQEKRYRTMEENSIKLQKNLRLY) forms a coiled coil. The tract at residues 105 to 127 (HEEEGEEKEEEENDNTTTTTTTT) is disordered. Positions 107–118 (EEGEEKEEEEND) are enriched in acidic residues. The stretch at 222-259 (TNIIELNHNQYEEKLKIYNQELTEVESKYVEINNQLLI) forms a coiled coil.

The protein resides in the cytoplasm. Its subcellular location is the cytoskeleton. Component of a cytoskeletal structure that is required for membrane curvature. This Candida albicans (strain SC5314 / ATCC MYA-2876) (Yeast) protein is RVS161-like protein RVS162.